The chain runs to 329 residues: BTB/POZ domain-containing adapter for CUL3-mediated RhoA degradation protein 1 (329 aa).

The span at 1-22 (MSAEASGPAAAAAPSLEAPKPS) shows a compositional bias: low complexity. Residues 1 to 31 (MSAEASGPAAAAAPSLEAPKPSGLEPGPAAY) are disordered. Residues 41 to 109 (KYVKLNVGGS…LRDGSVPLPE (69 aa)) enclose the BTB domain. The tract at residues 282 to 303 (ATGGAAGAGGAGRGEDEENREH) is disordered.

Belongs to the BACURD family. Homotetramer; forms a two-fold symmetric tetramer in solution. Interacts with CUL3; interaction is direct and forms a 5:5 heterodecamer. Component of the BCR(KCTD13) E3 ubiquitin ligase complex, at least composed of CUL3, KCTD13/BACURD1 and RBX1. Interacts with RHOA; with a preference for RhoA-GDP. Interacts with POLD2 and PCNA. Interacts with SPRTN. As to expression, expressed in a wide variety of tissues.

It is found in the nucleus. The protein operates within protein modification; protein ubiquitination. Functionally, substrate-specific adapter of a BCR (BTB-CUL3-RBX1) E3 ubiquitin-protein ligase complex required for synaptic transmission. The BCR(KCTD13) E3 ubiquitin ligase complex mediates the ubiquitination of RHOA, leading to its degradation by the proteasome Degradation of RHOA regulates the actin cytoskeleton and promotes synaptic transmission. The chain is BTB/POZ domain-containing adapter for CUL3-mediated RhoA degradation protein 1 (KCTD13) from Homo sapiens (Human).